Consider the following 281-residue polypeptide: MTSKEDGKAAPGEERRRSPLDHLPPPANSNKPLTPFSIEDILNKPSVRRSYSLCGAAHLLAAADKHAQGGLPLAGRALLSQTSPLCALEELASKTFKGLEVSVLQAAEGRDGMTIFGQRQTPKKRRKSRTAFTNHQIYELEKRFLYQKYLSPADRDQIAQQLGLTNAQVITWFQNRRAKLKRDLEEMKADVESAKKLGPSGQMDIVALAELEQNSEATAGGGGGCGRAKSRPGSPVLPPGAPKAPGAGALQLSPASPLTDQPASSQDCSEDEEDEEIDVDD.

The segment covering 1-20 (MTSKEDGKAAPGEERRRSPL) has biased composition (basic and acidic residues). Residues 1-35 (MTSKEDGKAAPGEERRRSPLDHLPPPANSNKPLTP) form a disordered region. The segment at residues 125-184 (RRKSRTAFTNHQIYELEKRFLYQKYLSPADRDQIAQQLGLTNAQVITWFQNRRAKLKRDL) is a DNA-binding region (homeobox). Residues 214-281 (NSEATAGGGG…EEDEEIDVDD (68 aa)) are disordered. Polar residues predominate over residues 253 to 267 (SPASPLTDQPASSQD). A compositionally biased stretch (acidic residues) spans 268–281 (CSEDEEDEEIDVDD).

As to quaternary structure, interacts with SKOR1 which acts as a transcriptional corepressor.

The protein resides in the nucleus. Its function is as follows. Transcription factor required for the development of GABAergic interneurons in the dorsal horn of the spinal cord and migration and further development of hypaxial muscle precursor cells for limb muscles, diaphragm and hypoglossal cord. The protein is Transcription factor LBX1 (LBX1) of Homo sapiens (Human).